The primary structure comprises 296 residues: 4-hydroxy-tetrahydrodipicolinate synthase (296 aa).

Position 49 (Thr49) interacts with pyruvate. The active-site Proton donor/acceptor is Tyr137. Lys165 serves as the catalytic Schiff-base intermediate with substrate. Position 208 (Ile208) interacts with pyruvate.

The protein belongs to the DapA family. Homotetramer; dimer of dimers.

The protein resides in the cytoplasm. It carries out the reaction L-aspartate 4-semialdehyde + pyruvate = (2S,4S)-4-hydroxy-2,3,4,5-tetrahydrodipicolinate + H2O + H(+). It functions in the pathway amino-acid biosynthesis; L-lysine biosynthesis via DAP pathway; (S)-tetrahydrodipicolinate from L-aspartate: step 3/4. Its function is as follows. Catalyzes the condensation of (S)-aspartate-beta-semialdehyde [(S)-ASA] and pyruvate to 4-hydroxy-tetrahydrodipicolinate (HTPA). The chain is 4-hydroxy-tetrahydrodipicolinate synthase from Ehrlichia canis (strain Jake).